The sequence spans 120 residues: Large ribosomal subunit protein uL22 (120 aa).

This sequence belongs to the universal ribosomal protein uL22 family. In terms of assembly, part of the 50S ribosomal subunit.

In terms of biological role, this protein binds specifically to 23S rRNA; its binding is stimulated by other ribosomal proteins, e.g. L4, L17, and L20. It is important during the early stages of 50S assembly. It makes multiple contacts with different domains of the 23S rRNA in the assembled 50S subunit and ribosome. Its function is as follows. The globular domain of the protein is located near the polypeptide exit tunnel on the outside of the subunit, while an extended beta-hairpin is found that lines the wall of the exit tunnel in the center of the 70S ribosome. This is Large ribosomal subunit protein uL22 from Corynebacterium aurimucosum (strain ATCC 700975 / DSM 44827 / CIP 107346 / CN-1) (Corynebacterium nigricans).